Consider the following 289-residue polypeptide: Shikimate dehydrogenase (NADP(+)) (289 aa).

Residues 19-21 (SLS) and threonine 66 each bind shikimate. Lysine 70 serves as the catalytic Proton acceptor. Residues asparagine 91 and aspartate 106 each contribute to the shikimate site. NADP(+) is bound by residues 131–135 (GNGGA) and leucine 229. Tyrosine 231 is a binding site for shikimate. NADP(+) is bound at residue glycine 252.

The protein belongs to the shikimate dehydrogenase family. Homodimer.

It catalyses the reaction shikimate + NADP(+) = 3-dehydroshikimate + NADPH + H(+). The protein operates within metabolic intermediate biosynthesis; chorismate biosynthesis; chorismate from D-erythrose 4-phosphate and phosphoenolpyruvate: step 4/7. Functionally, involved in the biosynthesis of the chorismate, which leads to the biosynthesis of aromatic amino acids. Catalyzes the reversible NADPH linked reduction of 3-dehydroshikimate (DHSA) to yield shikimate (SA). The chain is Shikimate dehydrogenase (NADP(+)) from Nostoc sp. (strain PCC 7120 / SAG 25.82 / UTEX 2576).